The chain runs to 221 residues: Urease accessory protein UreF (221 aa).

It belongs to the UreF family. As to quaternary structure, ureD, UreF and UreG form a complex that acts as a GTP-hydrolysis-dependent molecular chaperone, activating the urease apoprotein by helping to assemble the nickel containing metallocenter of UreC. The UreE protein probably delivers the nickel.

It localises to the cytoplasm. Required for maturation of urease via the functional incorporation of the urease nickel metallocenter. The protein is Urease accessory protein UreF of Aliivibrio fischeri (strain ATCC 700601 / ES114) (Vibrio fischeri).